The sequence spans 83 residues: CLAVATA3/ESR (CLE)-related protein 20 (83 aa).

Residues 1 to 29 form the signal peptide; that stretch reads MKNKNMNPSRPRLLCLIVFLFLVIVLSKA.

Belongs to the CLV3/ESR signal peptide family. As to expression, mostly expressed in roots, seedlings, leaves, flowers, stems and apex, and, to a lower extent, in siliques and pollen.

It localises to the secreted. The protein resides in the extracellular space. In terms of biological role, extracellular signal peptide that regulates cell fate. Represses root apical meristem maintenance. Inhibits irreversibly root growth by reducing cell division rates in the root apical meristem. Regulates the transition of protophloem cells from proliferation to differentiation, thus impinging on postembryonic growth capacity of the root meristem; this signaling pathway requires CRN and CLV2. This chain is CLAVATA3/ESR (CLE)-related protein 20, found in Arabidopsis thaliana (Mouse-ear cress).